Here is a 366-residue protein sequence, read N- to C-terminus: DNA polymerase IV (366 aa).

A UmuC domain is found at 6 to 197; it reads IIHVDMDYFY…LKVSKLWGIG (192 aa). Mg(2+) is bound by residues D10 and D114. The active site involves E115.

The protein belongs to the DNA polymerase type-Y family. In terms of assembly, monomer. Mg(2+) serves as cofactor.

The protein resides in the cytoplasm. It carries out the reaction DNA(n) + a 2'-deoxyribonucleoside 5'-triphosphate = DNA(n+1) + diphosphate. Poorly processive, error-prone DNA polymerase involved in untargeted mutagenesis. Copies undamaged DNA at stalled replication forks, which arise in vivo from mismatched or misaligned primer ends. These misaligned primers can be extended by PolIV. Exhibits no 3'-5' exonuclease (proofreading) activity. May be involved in translesional synthesis. In Methanosarcina acetivorans (strain ATCC 35395 / DSM 2834 / JCM 12185 / C2A), this protein is DNA polymerase IV.